We begin with the raw amino-acid sequence, 493 residues long: Glutamate--tRNA ligase (493 aa).

The 'HIGH' region motif lies at 10–20 (PSPTGDPHVGT). A 'KMSKS' region motif is present at residues 251–255 (KLSKR). Lys254 is a binding site for ATP.

It belongs to the class-I aminoacyl-tRNA synthetase family. Glutamate--tRNA ligase type 1 subfamily. Monomer.

Its subcellular location is the cytoplasm. It catalyses the reaction tRNA(Glu) + L-glutamate + ATP = L-glutamyl-tRNA(Glu) + AMP + diphosphate. Its function is as follows. Catalyzes the attachment of glutamate to tRNA(Glu) in a two-step reaction: glutamate is first activated by ATP to form Glu-AMP and then transferred to the acceptor end of tRNA(Glu). The sequence is that of Glutamate--tRNA ligase from Pseudomonas savastanoi pv. phaseolicola (strain 1448A / Race 6) (Pseudomonas syringae pv. phaseolicola (strain 1448A / Race 6)).